Reading from the N-terminus, the 358-residue chain is Peptide chain release factor 1 (358 aa).

Glutamine 236 bears the N5-methylglutamine mark.

Belongs to the prokaryotic/mitochondrial release factor family. Post-translationally, methylated by PrmC. Methylation increases the termination efficiency of RF1.

It localises to the cytoplasm. In terms of biological role, peptide chain release factor 1 directs the termination of translation in response to the peptide chain termination codons UAG and UAA. The protein is Peptide chain release factor 1 of Corynebacterium glutamicum (strain ATCC 13032 / DSM 20300 / JCM 1318 / BCRC 11384 / CCUG 27702 / LMG 3730 / NBRC 12168 / NCIMB 10025 / NRRL B-2784 / 534).